Reading from the N-terminus, the 82-residue chain is MENVLGLVALACGIIIGLGAIGACIGIALMGGKYLEASARQPELMNELQTKMFLLAGLIDAAFLIGVGIAMLFAFANPFVLK.

The next 2 helical transmembrane spans lie at 7–27 and 53–73; these read LVALACGIIIGLGAIGACIGI and FLLAGLIDAAFLIGVGIAMLF.

This sequence belongs to the ATPase C chain family. F-type ATPases have 2 components, F(1) - the catalytic core - and F(0) - the membrane proton channel. F(1) has five subunits: alpha(3), beta(3), gamma(1), delta(1), epsilon(1). F(0) has three main subunits: a(1), b(2) and c(10-14). The alpha and beta chains form an alternating ring which encloses part of the gamma chain. F(1) is attached to F(0) by a central stalk formed by the gamma and epsilon chains, while a peripheral stalk is formed by the delta and b chains.

The protein localises to the cell inner membrane. Its function is as follows. F(1)F(0) ATP synthase produces ATP from ADP in the presence of a proton or sodium gradient. F-type ATPases consist of two structural domains, F(1) containing the extramembraneous catalytic core and F(0) containing the membrane proton channel, linked together by a central stalk and a peripheral stalk. During catalysis, ATP synthesis in the catalytic domain of F(1) is coupled via a rotary mechanism of the central stalk subunits to proton translocation. In terms of biological role, key component of the F(0) channel; it plays a direct role in translocation across the membrane. A homomeric c-ring of between 10-14 subunits forms the central stalk rotor element with the F(1) delta and epsilon subunits. This is ATP synthase subunit c from Leptothrix cholodnii (strain ATCC 51168 / LMG 8142 / SP-6) (Leptothrix discophora (strain SP-6)).